Reading from the N-terminus, the 1425-residue chain is Ferlin 1 (1425 aa).

3 C2 domains span residues 1–123, 161–281, and 506–629; these read MAAK…RQWV, VNEG…PRWF, and TKAG…PVWL. Positions 871-952 are disordered; it reads RPQASRLSRE…ALAASPEEET (82 aa). 2 stretches are compositionally biased toward basic and acidic residues: residues 877 to 889 and 912 to 926; these read LSRE…ERGK and ETEK…KKEG. C2 domains are found at residues 1032 to 1160 and 1192 to 1319; these read EMDA…EQMV and RADY…QQHY. The chain crosses the membrane as a helical span at residues 1404–1424; it reads TGVWMTVAGIIALVIFVMFLL.

Belongs to the ferlin family.

It is found in the golgi apparatus. The protein resides in the trans-Golgi network membrane. The protein localises to the endosome membrane. Its subcellular location is the cytoplasm. Its function is as follows. Plays a role in microneme replenishment, probably at the vesicular trafficking level. Directs microneme organelle traffic differentially based on microneme population. Regulates microneme secretion: facilitates microneme membrane fusion with the plasma membrane. This chain is Ferlin 1, found in Toxoplasma gondii.